Reading from the N-terminus, the 337-residue chain is Large ribosomal subunit protein uL3 (337 aa).

Residues Met1 to Ser29 are disordered.

The protein belongs to the universal ribosomal protein uL3 family. In terms of assembly, part of the 50S ribosomal subunit. Forms a cluster with proteins L14 and L24e.

Functionally, one of the primary rRNA binding proteins, it binds directly near the 3'-end of the 23S rRNA, where it nucleates assembly of the 50S subunit. This chain is Large ribosomal subunit protein uL3, found in Methanothermobacter thermautotrophicus (strain ATCC 29096 / DSM 1053 / JCM 10044 / NBRC 100330 / Delta H) (Methanobacterium thermoautotrophicum).